The primary structure comprises 618 residues: UvrABC system protein C (618 aa).

The 80-residue stretch at 13 to 92 (DKPGVYLMKN…IKKYRPKYNI (80 aa)) folds into the GIY-YIG domain. The 36-residue stretch at 204–239 (LDIVENFKLNMEKAAENLEFEKAAMLRDKINIIEKI) folds into the UVR domain.

Belongs to the UvrC family. In terms of assembly, interacts with UvrB in an incision complex.

The protein resides in the cytoplasm. The UvrABC repair system catalyzes the recognition and processing of DNA lesions. UvrC both incises the 5' and 3' sides of the lesion. The N-terminal half is responsible for the 3' incision and the C-terminal half is responsible for the 5' incision. The chain is UvrABC system protein C from Clostridium botulinum (strain ATCC 19397 / Type A).